Here is a 374-residue protein sequence, read N- to C-terminus: DNA-directed RNA polymerase subunit alpha (374 aa).

Positions 1 to 270 are alpha N-terminal domain (alpha-NTD); that stretch reads MIFDEDSSSV…DQFQQFINFD (270 aa). The tract at residues 282–374 is alpha C-terminal domain (alpha-CTD); sequence KDVLPYDSNL…ESLSKQYSEE (93 aa).

Belongs to the RNA polymerase alpha chain family. Homodimer. The RNAP catalytic core consists of 2 alpha, 1 beta, 1 beta' and 1 omega subunit. When a sigma factor is associated with the core the holoenzyme is formed, which can initiate transcription.

It catalyses the reaction RNA(n) + a ribonucleoside 5'-triphosphate = RNA(n+1) + diphosphate. In terms of biological role, DNA-dependent RNA polymerase catalyzes the transcription of DNA into RNA using the four ribonucleoside triphosphates as substrates. This Ehrlichia ruminantium (strain Welgevonden) protein is DNA-directed RNA polymerase subunit alpha.